The sequence spans 1411 residues: Tectonin beta-propeller repeat-containing protein 2 (1411 aa).

WD repeat units lie at residues 23-66, 67-114, 115-161, 162-203, 204-265, 266-309, and 310-343; these read IPTK…HLNQ, MRKY…PGRN, KQLR…LDQG, LCNS…EKSV, RQIG…AGGV, KPFE…EYSI, and YLLDTVNQATVAGLEGSGDIVSVSCTENEIFFLK. Disordered regions lie at residues 379-439, 463-542, 579-637, and 758-779; these read QAEK…GSQP, VKRK…QENT, RELL…GPQS, and YAHGLPSSSSETSVTELGPSCS. Residues 400–420 are compositionally biased toward low complexity; the sequence is SSVASEPRSRSSSLNSTDSGS. Polar residues-rich tracts occupy residues 475–489, 496–542, 608–621, and 763–779; these read GSRSTCHSSLESTPC, SPQS…QENT, PNSTQLPFQEQDSS, and PSSSSETSVTELGPSCS. TECPR repeat units follow at residues 945-976, 994-1027, 1179-1209, 1226-1259, 1279-1310, and 1322-1353; these read NVVWALTEQRALLYREGVSSFCPEGEQWKCDI, QTLWALDIHGNLWFRTGIISKKPQGDDDHWWQVS, DALWALDSLGQVFIRTLSKSCPTGMHWTRLD, QHIWACDSRGGVYFRVGTQPLNPSLMLPAWIMIE, QMLWVLDSRWNVHVRTGITEEMPVGTAWEHVP, and RTVWARCPNGDLARRYGVTDKNPAGDYWKKIP. The segment at 1388 to 1411 is disordered; sequence HGTQKSSQAAMPHPEDLEDEWEVI.

Belongs to the WD repeat KIAA0329 family. Interacts with the ATG8 family members GABARAP, GABARAPL1, GABARAPL2, MAP1LC3B and MAP1LC3C. As to expression, detected in skin fibroblast (at protein level).

In terms of biological role, probably plays a role as positive regulator of autophagy. The chain is Tectonin beta-propeller repeat-containing protein 2 (TECPR2) from Homo sapiens (Human).